The sequence spans 264 residues: MKPTTISQLRRLKETGKKFATITAYDFSFAKLFEEEGIGVMLVGDSLGMTVQGHDSTLPVTVDDIAYHTRAVRRGAPHCLLLADLPFMAYATPEQAFENSAAVMRAGANMVKIEGGQWLADTVRMLTERAVPVCGHLGLTPQSVNIFGGYKVQGRDEAAAQTLLNDALALEAAGAQLLVLECVPVALAQRITNALSIPVIGIGAGNVTDGQILVMHDAFGITGGHIPKFAKNFLAEAGDMRAAVRQYIAEVESGAYPGEEHSFH.

D45 and D84 together coordinate Mg(2+). 3-methyl-2-oxobutanoate is bound by residues 45 to 46 (DS), D84, and K112. Residue E114 participates in Mg(2+) binding. The active-site Proton acceptor is the E181.

It belongs to the PanB family. Homodecamer; pentamer of dimers. Mg(2+) is required as a cofactor.

It localises to the cytoplasm. It carries out the reaction 3-methyl-2-oxobutanoate + (6R)-5,10-methylene-5,6,7,8-tetrahydrofolate + H2O = 2-dehydropantoate + (6S)-5,6,7,8-tetrahydrofolate. It participates in cofactor biosynthesis; (R)-pantothenate biosynthesis; (R)-pantoate from 3-methyl-2-oxobutanoate: step 1/2. Catalyzes the reversible reaction in which hydroxymethyl group from 5,10-methylenetetrahydrofolate is transferred onto alpha-ketoisovalerate to form ketopantoate. This is 3-methyl-2-oxobutanoate hydroxymethyltransferase from Cronobacter sakazakii (strain ATCC BAA-894) (Enterobacter sakazakii).